Consider the following 209-residue polypeptide: MISSDYIKDKILEIENIQGNLIRSRISEFKRLKKSDKYTLFKELSFCILTANTSAELGLKCQAYINDGFYRLDYNDLREELIKVHYRFYNKRASYIIGARDIIDDLEYIVNMDDHFRAREILIERVKGIGYKEASHFLRNVGVFDFAILDKHIIKFMKNNYYIKYENNSSRRRYLENEIVFNELAKKFNMEPGVFDLYIWYIETGKILK.

Residues Lys132 and Asp150 contribute to the active site.

Belongs to the type-2 OGG1 family.

It catalyses the reaction 2'-deoxyribonucleotide-(2'-deoxyribose 5'-phosphate)-2'-deoxyribonucleotide-DNA = a 3'-end 2'-deoxyribonucleotide-(2,3-dehydro-2,3-deoxyribose 5'-phosphate)-DNA + a 5'-end 5'-phospho-2'-deoxyribonucleoside-DNA + H(+). Its function is as follows. Catalyzes the excision of an oxidatively damaged form of guanine (7,8-dihydro-8-oxoguanine = 8-oxoG) from DNA. Also cleaves the DNA backbone at apurinic/apyrimidinic sites (AP sites). The polypeptide is 8-oxoguanine DNA glycosylase/AP lyase (Picrophilus torridus (strain ATCC 700027 / DSM 9790 / JCM 10055 / NBRC 100828 / KAW 2/3)).